The primary structure comprises 423 residues: Protein FAM43A (423 aa).

Positions 263–283 (EQELQEEEEEEQPEGCPEEEE) are enriched in acidic residues. 3 disordered regions span residues 263–298 (EQEL…EAEA), 321–344 (RGEA…LLLG), and 382–423 (LSGD…PHSG). The span at 323-335 (EALGGGGGSLGPG) shows a compositional bias: gly residues. Low complexity predominate over residues 383–393 (SGDSTGSESSI). Residues 401–411 (TSATAGDSSRQ) show a composition bias toward polar residues.

Belongs to the FAM43 family.

The protein is Protein FAM43A (FAM43A) of Homo sapiens (Human).